Reading from the N-terminus, the 264-residue chain is Thymidylate synthase (264 aa).

Arginine 21 contributes to the dUMP binding site. Histidine 51 is a (6R)-5,10-methylene-5,6,7,8-tetrahydrofolate binding site. 126–127 (RR) contributes to the dUMP binding site. Catalysis depends on cysteine 146, which acts as the Nucleophile. Residues 166–169 (RSCD), asparagine 177, and 207–209 (HLY) contribute to the dUMP site. Aspartate 169 is a binding site for (6R)-5,10-methylene-5,6,7,8-tetrahydrofolate. (6R)-5,10-methylene-5,6,7,8-tetrahydrofolate is bound at residue alanine 263.

Belongs to the thymidylate synthase family. Bacterial-type ThyA subfamily. Homodimer.

It localises to the cytoplasm. The enzyme catalyses dUMP + (6R)-5,10-methylene-5,6,7,8-tetrahydrofolate = 7,8-dihydrofolate + dTMP. The protein operates within pyrimidine metabolism; dTTP biosynthesis. Catalyzes the reductive methylation of 2'-deoxyuridine-5'-monophosphate (dUMP) to 2'-deoxythymidine-5'-monophosphate (dTMP) while utilizing 5,10-methylenetetrahydrofolate (mTHF) as the methyl donor and reductant in the reaction, yielding dihydrofolate (DHF) as a by-product. This enzymatic reaction provides an intracellular de novo source of dTMP, an essential precursor for DNA biosynthesis. The chain is Thymidylate synthase from Shewanella baltica (strain OS155 / ATCC BAA-1091).